A 631-amino-acid chain; its full sequence is UvrABC system protein C (631 aa).

A disordered region spans residues 1-20 (MKNETEAVADQPPKTGPVKP). The GIY-YIG domain occupies 34–112 (MSPGVYRMLD…IKQLKPKFNV (79 aa)). One can recognise a UVR domain in the interval 222–257 (TDLQRQLADGMAAASEAMEFERAAALRDRIRALTNV).

The protein belongs to the UvrC family. Interacts with UvrB in an incision complex.

It localises to the cytoplasm. In terms of biological role, the UvrABC repair system catalyzes the recognition and processing of DNA lesions. UvrC both incises the 5' and 3' sides of the lesion. The N-terminal half is responsible for the 3' incision and the C-terminal half is responsible for the 5' incision. The sequence is that of UvrABC system protein C from Jannaschia sp. (strain CCS1).